The primary structure comprises 357 residues: Homeobox protein HMX3 (357 aa).

2 disordered regions span residues 1-58 (MPEP…LFAP) and 129-229 (LPRP…RKKK). The span at 16–27 (PQPPPPPPPAPK) shows a compositional bias: pro residues. Basic and acidic residues-rich tracts occupy residues 130–140 (PRPEASEKALL) and 149–173 (TDRDSPEPLLKADPDHKELDSKSPD). Phosphoserine is present on residues Ser153 and Ser180. Over residues 191–209 (AAPGAAGASVGAAAATPGA) the composition is skewed to low complexity. Basic and acidic residues predominate over residues 210 to 223 (EDWKKGAESPEKKP). Positions 227 to 286 (KKKTRTVFSRSQVFQLESTFDMKRYLSSSERAGLAASLHLTETQVKIWFQNRRNKWKRQL) form a DNA-binding region, homeobox.

It belongs to the HMX homeobox family.

It is found in the nucleus. Functionally, transcription factor involved in specification of neuronal cell types and which is required for inner ear and hypothalamus development. Binds to the 5'-CAAGTG-3' core sequence. Controls semicircular canal formation in the inner ear. Also required for hypothalamic/pituitary axis of the CNS. The sequence is that of Homeobox protein HMX3 (HMX3) from Homo sapiens (Human).